The following is a 233-amino-acid chain: Chalcone--flavanone isomerase (233 aa).

Substrate is bound by residues threonine 47, asparagine 113, and serine 192.

It belongs to the chalcone isomerase family.

It carries out the reaction a chalcone = a flavanone.. The protein operates within secondary metabolite biosynthesis; flavonoid biosynthesis. In terms of biological role, catalyzes the intramolecular cyclization of bicyclic chalcones into tricyclic (S)-flavanones. Responsible for the isomerization of 4,2',4',6'-tetrahydroxychalcone (also termed chalcone) into naringenin. This chain is Chalcone--flavanone isomerase (CHI), found in Oryza sativa subsp. japonica (Rice).